We begin with the raw amino-acid sequence, 321 residues long: Glutaminase (321 aa).

Substrate contacts are provided by S69, N120, E165, N172, Y196, Y248, and V266.

It belongs to the glutaminase family. Homotetramer.

The enzyme catalyses L-glutamine + H2O = L-glutamate + NH4(+). The polypeptide is Glutaminase (Bacteroides fragilis (strain YCH46)).